A 372-amino-acid chain; its full sequence is NAD(P)H-quinone oxidoreductase subunit 1 (372 aa).

Helical transmembrane passes span 27–47 (LLWL…GVLV), 97–117 (LLFT…WLII), 128–148 (VGIG…GLLM), 176–196 (LALA…IDIV), 204–224 (FLSW…ICAL), 270–290 (LLVS…ELIA), 308–328 (SLGI…AILL), and 351–371 (ISLV…FAFG).

This sequence belongs to the complex I subunit 1 family. In terms of assembly, NDH-1 is composed of at least 11 different subunits.

It localises to the cellular thylakoid membrane. It catalyses the reaction a plastoquinone + NADH + (n+1) H(+)(in) = a plastoquinol + NAD(+) + n H(+)(out). The enzyme catalyses a plastoquinone + NADPH + (n+1) H(+)(in) = a plastoquinol + NADP(+) + n H(+)(out). Functionally, NDH-1 shuttles electrons from an unknown electron donor, via FMN and iron-sulfur (Fe-S) centers, to quinones in the respiratory and/or the photosynthetic chain. The immediate electron acceptor for the enzyme in this species is believed to be plastoquinone. Couples the redox reaction to proton translocation, and thus conserves the redox energy in a proton gradient. In Prochlorococcus marinus (strain SARG / CCMP1375 / SS120), this protein is NAD(P)H-quinone oxidoreductase subunit 1.